A 633-amino-acid chain; its full sequence is ABC transporter G family member 1 (633 aa).

One can recognise an ABC transporter domain in the interval 23–265 (LTWEDLWVTA…FALSGFPCPT (243 aa)). An ATP-binding site is contributed by 60–67 (GPSGSGKS). In terms of domain architecture, ABC transmembrane type-2 spans 340-552 (TQSLVLTRRS…AYEGMFKNEF (213 aa)). A glycan (N-linked (GlcNAc...) asparagine) is linked at asparagine 352. A run of 6 helical transmembrane segments spans residues 364-384 (LAVY…VGFS), 394-414 (MLMF…PSFV), 440-460 (LSAM…AYFM), 470-490 (FIYF…LMMI), 498-518 (FLMG…SGGF), and 580-600 (IDLV…LLVV).

The protein belongs to the ABC transporter superfamily. ABCG family. In terms of assembly, homodimer. Restricted to the petals, with the highest expression in the limb and, to a lesser extent, in petal tubes, probably in both epidermal and mesophyll cell layers.

The protein localises to the cell membrane. Its function is as follows. ABC transporter controlling the release of volatile organic compounds (VOCs), including floral volatile benzenoids and phenylpropanoids (FVBP), in flowers of fragrant cultivars (e.g. cv. Mitchell and cv. V26). This scent, mostly produced in the evening and night by the petals, attracts the pollinators (e.g. the night-active hawkmoth pollinator Manduca sexta). This is ABC transporter G family member 1 from Petunia hybrida (Petunia).